Here is a 258-residue protein sequence, read N- to C-terminus: Peptidase inhibitor 15 (258 aa).

The signal sequence occupies residues 1–21; that stretch reads MIEMISISAAFLLSLLCETCG. Residues 22–60 constitute a propeptide that is removed on maturation; that stretch reads LVLPKSSDLAIAASNYTIIKPDLSARLDPVKAPKARRKR. 2 N-linked (GlcNAc...) asparagine glycosylation sites follow: Asn-36 and Asn-124. The SCP domain occupies 71 to 211; that stretch reads VEYHNQVRGK…RRAVYLVCNY (141 aa).

This sequence belongs to the CRISP family.

It localises to the secreted. Its function is as follows. Serine protease inhibitor which displays weak inhibitory activity against trypsin. May be involved in facial patterning during embryonic development. This is Peptidase inhibitor 15 (pi15) from Xenopus laevis (African clawed frog).